Here is a 372-residue protein sequence, read N- to C-terminus: 4-hydroxy-3-methylbut-2-en-1-yl diphosphate synthase (flavodoxin) (372 aa).

Cys270, Cys273, Cys305, and Glu312 together coordinate [4Fe-4S] cluster.

It belongs to the IspG family. The cofactor is [4Fe-4S] cluster.

The catalysed reaction is (2E)-4-hydroxy-3-methylbut-2-enyl diphosphate + oxidized [flavodoxin] + H2O + 2 H(+) = 2-C-methyl-D-erythritol 2,4-cyclic diphosphate + reduced [flavodoxin]. Its pathway is isoprenoid biosynthesis; isopentenyl diphosphate biosynthesis via DXP pathway; isopentenyl diphosphate from 1-deoxy-D-xylulose 5-phosphate: step 5/6. Functionally, converts 2C-methyl-D-erythritol 2,4-cyclodiphosphate (ME-2,4cPP) into 1-hydroxy-2-methyl-2-(E)-butenyl 4-diphosphate. The sequence is that of 4-hydroxy-3-methylbut-2-en-1-yl diphosphate synthase (flavodoxin) from Escherichia coli (strain SMS-3-5 / SECEC).